The chain runs to 448 residues: N-succinylarginine dihydrolase (448 aa).

Residues 19–28 (GGLSYGNVAS), Asn-110, and 137–138 (HR) each bind substrate. Glu-174 is an active-site residue. Arg-214 contacts substrate. Residue His-250 is part of the active site. 2 residues coordinate substrate: Asp-252 and Asn-365. Cys-371 acts as the Nucleophile in catalysis.

This sequence belongs to the succinylarginine dihydrolase family. Homodimer.

The catalysed reaction is N(2)-succinyl-L-arginine + 2 H2O + 2 H(+) = N(2)-succinyl-L-ornithine + 2 NH4(+) + CO2. It participates in amino-acid degradation; L-arginine degradation via AST pathway; L-glutamate and succinate from L-arginine: step 2/5. In terms of biological role, catalyzes the hydrolysis of N(2)-succinylarginine into N(2)-succinylornithine, ammonia and CO(2). In Ectopseudomonas mendocina (strain ymp) (Pseudomonas mendocina), this protein is N-succinylarginine dihydrolase.